Consider the following 523-residue polypeptide: Calcium-dependent protein kinase 34 (523 aa).

The tract at residues 1–60 is disordered; the sequence is MGNCCSHGRDSDDNKEEPRPENGGGGVGAAEASVRASKHPPASPPPATKQGPIGPVLGRP. Gly-2 carries the N-myristoyl glycine lipid modification. Residues 7-20 are compositionally biased toward basic and acidic residues; it reads HGRDSDDNKEEPRP. The Protein kinase domain occupies 68-326; that stretch reads YTLGKELGRG…AAQVLNHPWI (259 aa). Residues 74–82 and Lys-97 contribute to the ATP site; that span reads LGRGQFGVT. Asp-192 functions as the Proton acceptor in the catalytic mechanism. Position 232 is a phosphoserine (Ser-232). Residues 332–362 form an autoinhibitory domain region; the sequence is APDVPLDNAVMSRLKQFKAMNNFKKVALRVI. EF-hand domains follow at residues 369–404, 405–440, 441–476, and 480–511; these read EEIM…QGTR, LSEY…INRL, DREE…FGMN, and DIKE…GNPD. Ca(2+) is bound by residues Asp-382, Asp-384, Ser-386, Thr-388, Glu-393, Asp-418, Asp-420, Asn-422, Thr-424, Glu-429, Asp-454, Asp-456, Ser-458, Tyr-460, Glu-465, Asp-489, Asp-491, Asp-493, Arg-495, and Glu-500.

The protein belongs to the protein kinase superfamily. Ser/Thr protein kinase family. CDPK subfamily.

It localises to the membrane. It carries out the reaction L-seryl-[protein] + ATP = O-phospho-L-seryl-[protein] + ADP + H(+). The catalysed reaction is L-threonyl-[protein] + ATP = O-phospho-L-threonyl-[protein] + ADP + H(+). Its activity is regulated as follows. Activated by calcium. Autophosphorylation may play an important role in the regulation of the kinase activity. May play a role in signal transduction pathways that involve calcium as a second messenger. This is Calcium-dependent protein kinase 34 (CPK34) from Arabidopsis thaliana (Mouse-ear cress).